The following is a 134-amino-acid chain: TSC22 domain family protein 3 (134 aa).

Residues 1-60 form an AP1-binding region; that stretch reads MNTEMYQTPMEVAVYQLHNFSISFFSSLLGGDVVSVKLDNSASGASVVALDNKIEQAMDL. The segment at 76–97 is leucine-zipper; that stretch reads LKEQIRELVEKNSQLERENTLL. Residues 101-134 are disordered; sequence ASPEQLEKFQSRLSPEEPAPEAPETPEAPGGSAV. Ser102 is subject to Phosphoserine. The residue at position 125 (Thr125) is a Phosphothreonine. A compositionally biased stretch (low complexity) spans 125–134; sequence TPEAPGGSAV.

It belongs to the TSC-22/Dip/Bun family. In terms of assembly, can form homodimers, however it is likely to function as a monomer. Interacts with NFKB1. Interacts (via N-terminus) with JUN and FOS; these interactions inhibit the binding of active AP1 to its target DNA. Interacts with MYOD1. Interacts with HDAC1; this interaction affects HDAC1 activity on MYOG promoter and thus inhibits MYOD1 transcriptional activity.

It localises to the cytoplasm. It is found in the nucleus. Protects T-cells from IL2 deprivation-induced apoptosis through the inhibition of FOXO3A transcriptional activity that leads to the down-regulation of the pro-apoptotic factor BCL2L11. In macrophages, plays a role in the anti-inflammatory and immunosuppressive effects of glucocorticoids and IL10. In T-cells, inhibits anti-CD3-induced NFKB1 nuclear translocation and thereby NFKB1 DNA-binding activities. In vitro, suppresses AP-1 transcription factor complex DNA-binding activities. The polypeptide is TSC22 domain family protein 3 (Tsc22d3) (Rattus norvegicus (Rat)).